A 338-amino-acid chain; its full sequence is Homoserine kinase (338 aa).

Belongs to the GHMP kinase family. Homoserine kinase subfamily.

It catalyses the reaction L-homoserine + ATP = O-phospho-L-homoserine + ADP + H(+). The protein operates within amino-acid biosynthesis; L-threonine biosynthesis; L-threonine from L-aspartate: step 4/5. Its function is as follows. Commits homoserine to the threonine biosynthesis pathway by catalyzing its O-phosphorylation. This is Homoserine kinase from Schizosaccharomyces pombe (strain 972 / ATCC 24843) (Fission yeast).